The chain runs to 985 residues: Ankyrin repeat domain-containing protein 24 (985 aa).

ANK repeat units follow at residues 52-81, 85-114, 118-147, 151-180, and 184-213; these read EGKS…DVMS, AGYN…VVDI, SGWT…HMNP, SGAT…ATND, and QGRT…QLSI. 5 disordered regions span residues 243-293, 311-360, 386-412, 476-503, and 594-614; these read RSSP…DRDA, IRGL…LGRE, QDEE…SAEE, YTEA…TAYQ, and DNAE…NPGM. The stretch at 291–488 forms a coiled coil; sequence RDAYEEIVRL…AMHSQQQQQE (198 aa). 2 stretches are compositionally biased toward basic and acidic residues: residues 311-326 and 349-360; these read IRGL…KEPL and EKQEEKESLGRE.

In terms of assembly, homodimer. Interacts (via C-terminal domain) with TRIOBP (via C-terminal domain) isoform 4; recruits TRIOBP isoform 4 to stereocilia rootlets. In terms of tissue distribution, expressed in vestibular hair bundles.

It localises to the cell membrane. The protein resides in the cell projection. The protein localises to the stereocilium. Functionally, component of the stereocilia rootlet in hair cells of inner ear. Bridges the apical plasma membrane with the lower rootlet and maintains normal distribution of TRIOBP, thereby reinforcing stereocilia insertion points and organizing rootlets for hearing with long-term resilience. The protein is Ankyrin repeat domain-containing protein 24 (Ankrd24) of Mus musculus (Mouse).